Here is a 46-residue protein sequence, read N- to C-terminus: Viscotoxin-1-PS (46 aa).

3 disulfide bridges follow: C3/C40, C4/C32, and C16/C26.

It belongs to the plant thionin (TC 1.C.44) family.

Its subcellular location is the secreted. Thionins are small plant proteins which are toxic to animal cells. They seem to exert their toxic effect at the level of the cell membrane. Their precise function is not known. This is Viscotoxin-1-PS (THI2.4) from Viscum album (European mistletoe).